The primary structure comprises 1032 residues: Connector enhancer of kinase suppressor of ras 2 (1032 aa).

The region spanning 11 to 76 is the SAM domain; sequence WSPSQVVDWM…LEAVDLLCAL (66 aa). Position 12 is a phosphoserine (Ser12). A CRIC domain is found at 84 to 178; that stretch reads NLKTLSHKLN…TIVQQDCTVY (95 aa). Residues 215 to 297 form the PDZ domain; that stretch reads VIQLANIKPS…GVILTLKKRP (83 aa). In terms of domain architecture, DUF1170 spans 302-515; that stretch reads TSAPALLKNM…PAHYSLLPSL (214 aa). The segment covering 324–340 has biased composition (low complexity); it reads RSPTSSVATPSSTISTP. The interval 324–349 is disordered; that stretch reads RSPTSSVATPSSTISTPTKRDSSALQ. A phosphoserine mark is found at Ser338 and Ser390. Disordered stretches follow at residues 480 to 509 and 538 to 558; these read EEYM…PAHY and FQQS…ISGK. Over residues 545-558 the composition is skewed to basic residues; that stretch reads HKSKKKNKGAISGK. The PH domain occupies 570–669; that stretch reads RGDCEGWLWK…WLNRINMLTA (100 aa). The segment at 682-766 is disordered; that stretch reads DYWSESDKEE…PIRKTASQRR (85 aa). The residue at position 683 (Tyr683) is a Phosphotyrosine. A compositionally biased stretch (acidic residues) spans 683 to 693; that stretch reads YWSESDKEEAD. A phosphoserine mark is found at Ser685 and Ser687. A compositionally biased stretch (pro residues) spans 701 to 714; sequence DSPPPPYDTYPRPP. The span at 730–740 shows a compositional bias: low complexity; sequence LSSTETSQSQS. Residues Ser756 and Ser767 each carry the phosphoserine modification. A disordered region spans residues 864–900; that stretch reads ACDPQDDIQPPEVEEEEEEEEEEAAGENVGEKNENRE. The stretch at 874 to 917 forms a coiled coil; sequence PEVEEEEEEEEEEAAGENVGEKNENREEKLGDSLQDLYRALEEA. A compositionally biased stretch (acidic residues) spans 875-888; it reads EVEEEEEEEEEEAA. The residue at position 906 (Ser906) is a Phosphoserine.

It belongs to the CNKSR family. In terms of assembly, interacts with RAF1, RAB2L and RAL GTPase proteins. Post-translationally, phosphorylated on tyrosine.

It localises to the cytoplasm. Its subcellular location is the membrane. Its function is as follows. May function as an adapter protein or regulator of Ras signaling pathways. This Mus musculus (Mouse) protein is Connector enhancer of kinase suppressor of ras 2 (Cnksr2).